The following is a 517-amino-acid chain: Putative thymidine phosphorylase (517 aa).

Belongs to the thymidine/pyrimidine-nucleoside phosphorylase family. Type 2 subfamily.

It catalyses the reaction thymidine + phosphate = 2-deoxy-alpha-D-ribose 1-phosphate + thymine. The chain is Putative thymidine phosphorylase from Legionella pneumophila subsp. pneumophila (strain Philadelphia 1 / ATCC 33152 / DSM 7513).